We begin with the raw amino-acid sequence, 523 residues long: NAD(P)H-quinone oxidoreductase subunit 2 (523 aa).

The next 13 membrane-spanning stretches (helical) occupy residues 29–49 (AVLP…VDLA), 57–77 (WVPP…ALQW), 94–114 (LAVA…LISW), 132–152 (LAAT…SIFI), 182–202 (LLVG…LYGL), 221–241 (PIAA…IAAV), 255–275 (PTPV…ALAL), 291–311 (LLFT…ALAQ), 317–337 (MLAY…VCGT), 345–365 (VLYM…IILF), 389–409 (LGLS…GFFG), 424–444 (LLVV…ISVI), and 477–497 (VALI…NPLF).

Belongs to the complex I subunit 2 family. In terms of assembly, NDH-1 can be composed of about 15 different subunits; different subcomplexes with different compositions have been identified which probably have different functions.

The protein resides in the cellular thylakoid membrane. The enzyme catalyses a plastoquinone + NADH + (n+1) H(+)(in) = a plastoquinol + NAD(+) + n H(+)(out). It catalyses the reaction a plastoquinone + NADPH + (n+1) H(+)(in) = a plastoquinol + NADP(+) + n H(+)(out). NDH-1 shuttles electrons from an unknown electron donor, via FMN and iron-sulfur (Fe-S) centers, to quinones in the respiratory and/or the photosynthetic chain. The immediate electron acceptor for the enzyme in this species is believed to be plastoquinone. Couples the redox reaction to proton translocation, and thus conserves the redox energy in a proton gradient. Cyanobacterial NDH-1 also plays a role in inorganic carbon-concentration. This Synechococcus sp. (strain CC9902) protein is NAD(P)H-quinone oxidoreductase subunit 2.